The chain runs to 238 residues: Phosphoribosylaminoimidazole-succinocarboxamide synthase (238 aa).

This sequence belongs to the SAICAR synthetase family.

It catalyses the reaction 5-amino-1-(5-phospho-D-ribosyl)imidazole-4-carboxylate + L-aspartate + ATP = (2S)-2-[5-amino-1-(5-phospho-beta-D-ribosyl)imidazole-4-carboxamido]succinate + ADP + phosphate + 2 H(+). It functions in the pathway purine metabolism; IMP biosynthesis via de novo pathway; 5-amino-1-(5-phospho-D-ribosyl)imidazole-4-carboxamide from 5-amino-1-(5-phospho-D-ribosyl)imidazole-4-carboxylate: step 1/2. This is Phosphoribosylaminoimidazole-succinocarboxamide synthase (purC) from Pyrococcus horikoshii (strain ATCC 700860 / DSM 12428 / JCM 9974 / NBRC 100139 / OT-3).